Here is an 85-residue protein sequence, read N- to C-terminus: Alpha-defensin 14 (85 aa).

The signal sequence occupies residues 1 to 11; sequence ALVLLAFQVQA. A propeptide spanning residues 12-50 is cleaved from the precursor; sequence DPIQNTDEETKTEEQPGEDDQAVSVSFGDPEGSSLQEES. The tract at residues 13-48 is disordered; sequence PIQNTDEETKTEEQPGEDDQAVSVSFGDPEGSSLQE. Disulfide bonds link C56-C84, C58-C73, and C63-C83.

This sequence belongs to the alpha-defensin family. In terms of tissue distribution, paneth cells of the small bowel.

Its subcellular location is the secreted. Functionally, probably contributes to the antimicrobial barrier function of the small bowel mucosa. The protein is Alpha-defensin 14 (Defa14) of Mus musculus (Mouse).